Reading from the N-terminus, the 505-residue chain is Lysine--tRNA ligase (505 aa).

Mg(2+) is bound by residues Glu-415 and Glu-422.

It belongs to the class-II aminoacyl-tRNA synthetase family. In terms of assembly, homodimer. The cofactor is Mg(2+).

It localises to the cytoplasm. The enzyme catalyses tRNA(Lys) + L-lysine + ATP = L-lysyl-tRNA(Lys) + AMP + diphosphate. In Shigella flexneri, this protein is Lysine--tRNA ligase.